The chain runs to 428 residues: Histidinol dehydrogenase (428 aa).

The substrate site is built by serine 234, glutamine 256, and histidine 259. Zn(2+) is bound by residues glutamine 256 and histidine 259. Residues glutamate 323 and histidine 324 each act as proton acceptor in the active site. Substrate is bound by residues histidine 324, aspartate 357, glutamate 411, and histidine 416. Aspartate 357 provides a ligand contact to Zn(2+). Residue histidine 416 participates in Zn(2+) binding.

Belongs to the histidinol dehydrogenase family. It depends on Zn(2+) as a cofactor.

It carries out the reaction L-histidinol + 2 NAD(+) + H2O = L-histidine + 2 NADH + 3 H(+). It participates in amino-acid biosynthesis; L-histidine biosynthesis; L-histidine from 5-phospho-alpha-D-ribose 1-diphosphate: step 9/9. Functionally, catalyzes the sequential NAD-dependent oxidations of L-histidinol to L-histidinaldehyde and then to L-histidine. The protein is Histidinol dehydrogenase of Campylobacter jejuni (strain RM1221).